A 155-amino-acid chain; its full sequence is DNA gyrase inhibitor (155 aa).

It belongs to the DNA gyrase inhibitor family. In terms of assembly, interacts with DNA gyrase.

Its subcellular location is the cytoplasm. Functionally, inhibits the supercoiling activity of DNA gyrase. Acts by inhibiting DNA gyrase at an early step, prior to (or at the step of) binding of DNA by the gyrase. It protects cells against toxins that target DNA gyrase, by inhibiting activity of these toxins and reducing the formation of lethal double-strand breaks in the cell. This is DNA gyrase inhibitor from Erwinia billingiae (strain Eb661).